Reading from the N-terminus, the 423-residue chain is Glucose-1-phosphate adenylyltransferase (423 aa).

Alpha-D-glucose 1-phosphate contacts are provided by residues Tyr98, Gly163, 178–179, and Ser189; that span reads EK.

The protein belongs to the bacterial/plant glucose-1-phosphate adenylyltransferase family. In terms of assembly, homotetramer.

It catalyses the reaction alpha-D-glucose 1-phosphate + ATP + H(+) = ADP-alpha-D-glucose + diphosphate. The protein operates within glycan biosynthesis; glycogen biosynthesis. Its function is as follows. Involved in the biosynthesis of ADP-glucose, a building block required for the elongation reactions to produce glycogen. Catalyzes the reaction between ATP and alpha-D-glucose 1-phosphate (G1P) to produce pyrophosphate and ADP-Glc. In Thermotoga sp. (strain RQ2), this protein is Glucose-1-phosphate adenylyltransferase.